The following is a 315-amino-acid chain: Adenine deaminase (315 aa).

Residues histidine 14, histidine 16, and histidine 194 each contribute to the Zn(2+) site. The active-site Proton donor is the glutamate 197. Position 275 (aspartate 275) interacts with Zn(2+). Aspartate 276 lines the substrate pocket.

This sequence belongs to the metallo-dependent hydrolases superfamily. Adenosine and AMP deaminases family. Adenine deaminase type 2 subfamily. Zn(2+) is required as a cofactor.

It carries out the reaction adenine + H2O + H(+) = hypoxanthine + NH4(+). Functionally, catalyzes the hydrolytic deamination of adenine to hypoxanthine. Plays an important role in the purine salvage pathway and in nitrogen catabolism. The sequence is that of Adenine deaminase from Pseudomonas putida (strain ATCC 47054 / DSM 6125 / CFBP 8728 / NCIMB 11950 / KT2440).